The chain runs to 907 residues: Protein translocase subunit SecA (907 aa).

ATP contacts are provided by residues Gln-87, 105–109, and Asp-512; that span reads GEGKT. Zn(2+)-binding residues include Cys-891, Cys-893, Cys-902, and His-903.

It belongs to the SecA family. Monomer and homodimer. Part of the essential Sec protein translocation apparatus which comprises SecA, SecYEG and auxiliary proteins SecDF-YajC and YidC. It depends on Zn(2+) as a cofactor.

It localises to the cell inner membrane. The protein resides in the cytoplasm. It carries out the reaction ATP + H2O + cellular proteinSide 1 = ADP + phosphate + cellular proteinSide 2.. In terms of biological role, part of the Sec protein translocase complex. Interacts with the SecYEG preprotein conducting channel. Has a central role in coupling the hydrolysis of ATP to the transfer of proteins into and across the cell membrane, serving both as a receptor for the preprotein-SecB complex and as an ATP-driven molecular motor driving the stepwise translocation of polypeptide chains across the membrane. In Shewanella loihica (strain ATCC BAA-1088 / PV-4), this protein is Protein translocase subunit SecA.